The following is a 142-amino-acid chain: Large ribosomal subunit protein mL42 (142 aa).

The transit peptide at 1 to 32 (MALAAVKWAISSRTMLKHLFPVENGALYCVGH) directs the protein to the mitochondrion.

It belongs to the mitochondrion-specific ribosomal protein mL42 family. Component of the mitochondrial ribosome large subunit (39S) which comprises a 16S rRNA and about 50 distinct proteins. Component of the mitochondrial ribosome small subunit (28S) which comprises a 12S rRNA and about 30 distinct proteins.

It localises to the mitochondrion. In Bos taurus (Bovine), this protein is Large ribosomal subunit protein mL42 (MRPL42).